The primary structure comprises 392 residues: Phosphoglycerate kinase (392 aa).

Substrate is bound by residues 21–23 (DFN), Arg36, 59–62 (HLGR), Arg118, and Arg151. Residues Lys201, Gly292, Glu323, and 349-352 (GGDS) contribute to the ATP site.

It belongs to the phosphoglycerate kinase family. Monomer.

The protein resides in the cytoplasm. The enzyme catalyses (2R)-3-phosphoglycerate + ATP = (2R)-3-phospho-glyceroyl phosphate + ADP. It functions in the pathway carbohydrate degradation; glycolysis; pyruvate from D-glyceraldehyde 3-phosphate: step 2/5. This Borrelia duttonii (strain Ly) protein is Phosphoglycerate kinase.